The primary structure comprises 201 residues: Adenylyl-sulfate kinase (201 aa).

35-42 contacts ATP; the sequence is GLSGSGKS. The active-site Phosphoserine intermediate is Ser-109.

It belongs to the APS kinase family.

It carries out the reaction adenosine 5'-phosphosulfate + ATP = 3'-phosphoadenylyl sulfate + ADP + H(+). It participates in sulfur metabolism; hydrogen sulfide biosynthesis; sulfite from sulfate: step 2/3. Catalyzes the synthesis of activated sulfate. The sequence is that of Adenylyl-sulfate kinase from Shigella flexneri.